A 267-amino-acid chain; its full sequence is Tryptophan synthase alpha chain (267 aa).

Residues Glu-49 and Asp-60 each act as proton acceptor in the active site.

Belongs to the TrpA family. In terms of assembly, tetramer of two alpha and two beta chains.

The catalysed reaction is (1S,2R)-1-C-(indol-3-yl)glycerol 3-phosphate + L-serine = D-glyceraldehyde 3-phosphate + L-tryptophan + H2O. It participates in amino-acid biosynthesis; L-tryptophan biosynthesis; L-tryptophan from chorismate: step 5/5. Functionally, the alpha subunit is responsible for the aldol cleavage of indoleglycerol phosphate to indole and glyceraldehyde 3-phosphate. This Acidothermus cellulolyticus (strain ATCC 43068 / DSM 8971 / 11B) protein is Tryptophan synthase alpha chain.